Here is a 143-residue protein sequence, read N- to C-terminus: UPF0763 protein HH_0976 (143 aa).

Belongs to the UPF0763 family.

This chain is UPF0763 protein HH_0976, found in Helicobacter hepaticus (strain ATCC 51449 / 3B1).